Here is a 74-residue protein sequence, read N- to C-terminus: Protein SOM1, mitochondrial (74 aa).

Component of the mitochondrial inner membrane peptidase (IMP) complex which at least consists of IMP1, IMP2 and SOM1.

The protein resides in the mitochondrion inner membrane. Its function is as follows. Non-catalytic component of the mitochondrial inner membrane peptidase (IMP) complex. IMP catalyzes the removal of signal peptides required for the targeting of proteins from the mitochondrial matrix, across the inner membrane, into the inter-membrane space. SOM1 facilitates cleavage of a subset of IMP substrates. This is Protein SOM1, mitochondrial (SOM1) from Saccharomyces cerevisiae (strain ATCC 204508 / S288c) (Baker's yeast).